We begin with the raw amino-acid sequence, 1240 residues long: RNA2 polyprotein (1240 aa).

The segment covering 1193–1210 has biased composition (polar residues); it reads VGTTVPPTADASTSNSQG. Residues 1193–1240 form a disordered region; it reads VGTTVPPTADASTSNSQGGDEDIGDQYSAALGRGRGRGSRPGPSPIRG.

This sequence belongs to the nepoviruses RNA2 polyprotein family. In terms of processing, specific enzymatic cleavages in vivo by the P1 encoded 3C-like protease yield mature proteins.

It is found in the host cell junction. The protein localises to the host plasmodesma. Its subcellular location is the virion. Functionally, implicated in RNA2 replication. Could also be required for nematode transmission of the virus. Transports viral genome to neighboring plant cells directly through plasmosdesmata, without any budding. The movement protein allows efficient cell to cell propagation, by bypassing the host cell wall barrier. Acts by forming a tubular structure at the host plasmodesmata, enlarging it enough to allow free passage of virion capsids. In Cycas necrotic stunt virus (CNSV), this protein is RNA2 polyprotein.